The sequence spans 172 residues: Shikimate kinase (172 aa).

An ATP-binding site is contributed by 11 to 16 (GCGKST). S15 provides a ligand contact to Mg(2+). Residues D33, R57, and G80 each coordinate substrate. Position 120 (R120) interacts with ATP. R142 is a substrate binding site. ATP is bound at residue R158.

The protein belongs to the shikimate kinase family. In terms of assembly, monomer. It depends on Mg(2+) as a cofactor.

Its subcellular location is the cytoplasm. The catalysed reaction is shikimate + ATP = 3-phosphoshikimate + ADP + H(+). It participates in metabolic intermediate biosynthesis; chorismate biosynthesis; chorismate from D-erythrose 4-phosphate and phosphoenolpyruvate: step 5/7. Functionally, catalyzes the specific phosphorylation of the 3-hydroxyl group of shikimic acid using ATP as a cosubstrate. The protein is Shikimate kinase of Flavobacterium johnsoniae (strain ATCC 17061 / DSM 2064 / JCM 8514 / BCRC 14874 / CCUG 350202 / NBRC 14942 / NCIMB 11054 / UW101) (Cytophaga johnsonae).